The sequence spans 239 residues: Ribonuclease PH (239 aa).

Residues Arg86 and 124–126 (GTR) each bind phosphate.

The protein belongs to the RNase PH family. Homohexameric ring arranged as a trimer of dimers.

The enzyme catalyses tRNA(n+1) + phosphate = tRNA(n) + a ribonucleoside 5'-diphosphate. In terms of biological role, phosphorolytic 3'-5' exoribonuclease that plays an important role in tRNA 3'-end maturation. Removes nucleotide residues following the 3'-CCA terminus of tRNAs; can also add nucleotides to the ends of RNA molecules by using nucleoside diphosphates as substrates, but this may not be physiologically important. Probably plays a role in initiation of 16S rRNA degradation (leading to ribosome degradation) during starvation. In Anaeromyxobacter dehalogenans (strain 2CP-C), this protein is Ribonuclease PH.